Reading from the N-terminus, the 943-residue chain is Protein translocase subunit SecA (943 aa).

Residues Gln77, Gly95–Thr99, and Asp484 each bind ATP.

Belongs to the SecA family. As to quaternary structure, monomer and homodimer. Part of the essential Sec protein translocation apparatus which comprises SecA, SecYEG and auxiliary proteins SecDF. Other proteins may also be involved.

Its subcellular location is the cell membrane. It is found in the cytoplasm. The catalysed reaction is ATP + H2O + cellular proteinSide 1 = ADP + phosphate + cellular proteinSide 2.. In terms of biological role, part of the Sec protein translocase complex. Interacts with the SecYEG preprotein conducting channel. Has a central role in coupling the hydrolysis of ATP to the transfer of proteins into and across the cell membrane, serving as an ATP-driven molecular motor driving the stepwise translocation of polypeptide chains across the membrane. This Mesoplasma florum (strain ATCC 33453 / NBRC 100688 / NCTC 11704 / L1) (Acholeplasma florum) protein is Protein translocase subunit SecA.